Reading from the N-terminus, the 213-residue chain is ATP-dependent dethiobiotin synthetase BioD (213 aa).

Position 12–17 (12–17 (NVGKTF)) interacts with ATP. Thr-16 is a Mg(2+) binding site. The active site involves Lys-36. Position 40 (Ser-40) interacts with substrate. ATP contacts are provided by residues Asp-53, 110–113 (EGTG), and 170–171 (NQ). Positions 53 and 110 each coordinate Mg(2+).

It belongs to the dethiobiotin synthetase family. In terms of assembly, homodimer. Mg(2+) is required as a cofactor.

It localises to the cytoplasm. It carries out the reaction (7R,8S)-7,8-diammoniononanoate + CO2 + ATP = (4R,5S)-dethiobiotin + ADP + phosphate + 3 H(+). It functions in the pathway cofactor biosynthesis; biotin biosynthesis; biotin from 7,8-diaminononanoate: step 1/2. Its function is as follows. Catalyzes a mechanistically unusual reaction, the ATP-dependent insertion of CO2 between the N7 and N8 nitrogen atoms of 7,8-diaminopelargonic acid (DAPA, also called 7,8-diammoniononanoate) to form a ureido ring. In Ruthia magnifica subsp. Calyptogena magnifica, this protein is ATP-dependent dethiobiotin synthetase BioD.